An 829-amino-acid chain; its full sequence is MEARYNFKEIEPKWQRRWEASDLYRVTEDPDKPKFYCLEMFPYPSGNLHMGHVRNYSIGDVVARVKRMRGYNVLHPMGWDAFGLPAENAAIHRGIPPAEWTWSNIANMRRQLHAMGISYDWDREVATCHPNYYRWTQWLFLQMYKHGLAYRKKAAVNWCPSCATVLANEQVVDGACERCHTPVMRKDLEQWFFRITDYADRLLEDLKKLPGWPDKVKIMQENWIGKSSGAEVVFRVEGSGEEIPVFTTRPDTLYGVTYLVLAPEHPLVEKLTAGTPYEGPVEEFVQAARYLSALDRTATEKEKEGLFTGAYAINPVNNERVPIWIANYVLMEYGTGAVMGVPAHDQRDFEFARKYDLPVKVVIRPASSELPAGELAAAYVEDGIMVNSGPFNGLPNREGIQKVTEYLESIGRGRARVNYRLRDWLISRQRYWGAPIPMIYCDQCGIVPVPEEDLPVILPEGVEFRPTGESPLTYCPEFVNTTCPRCGGPARRETDTMDTFVCSSWYFLRYTSPHSQDRAFERDKVDYWMNVDQYIGGVEHAILHLMYARFFTKALHDFGLVGVEEPFQNLLTQGMVLKDGSKMSKSKGNIVSPEEIINRYGADTARLFILFAAPPERDLEWSDQGVEGCYRFLNRVWRLVGSYADAVRRAGGSLEIRSHADRELWRLLHATIKKVTEDVEERFNFNTAISAIMELVNGCYRYQDTVPEEEQNLVLMGEVLRKLVTLLAPFAPHITEELWQGLGGQESVHRESWPQYDPEALVEEEITLVIQINGKVKDRMQVPAGLAREKIEELVLNRDKVAALLAGQQVVKVIVVPDKLVNVVARRAS.

Positions 42–52 match the 'HIGH' region motif; sequence PYPSGNLHMGH. The 'KMSKS' region signature appears at 582 to 586; the sequence is KMSKS. ATP is bound at residue Lys-585.

It belongs to the class-I aminoacyl-tRNA synthetase family.

It is found in the cytoplasm. The catalysed reaction is tRNA(Leu) + L-leucine + ATP = L-leucyl-tRNA(Leu) + AMP + diphosphate. The sequence is that of Leucine--tRNA ligase from Moorella thermoacetica (strain ATCC 39073 / JCM 9320).